Reading from the N-terminus, the 65-residue chain is Large ribosomal subunit protein bL35 (65 aa).

It belongs to the bacterial ribosomal protein bL35 family.

The sequence is that of Large ribosomal subunit protein bL35 from Caldicellulosiruptor saccharolyticus (strain ATCC 43494 / DSM 8903 / Tp8T 6331).